A 430-amino-acid polypeptide reads, in one-letter code: Phosphomethylpyrimidine synthase (430 aa).

Residues N67, M96, Y125, H161, 183-185 (SRG), 224-227 (DALR), and E263 contribute to the substrate site. Position 267 (H267) interacts with Zn(2+). Y290 lines the substrate pocket. Position 331 (H331) interacts with Zn(2+). [4Fe-4S] cluster-binding residues include C406, C409, and C413.

Belongs to the ThiC family. Homodimer. [4Fe-4S] cluster serves as cofactor.

The catalysed reaction is 5-amino-1-(5-phospho-beta-D-ribosyl)imidazole + S-adenosyl-L-methionine = 4-amino-2-methyl-5-(phosphooxymethyl)pyrimidine + CO + 5'-deoxyadenosine + formate + L-methionine + 3 H(+). It functions in the pathway cofactor biosynthesis; thiamine diphosphate biosynthesis. In terms of biological role, catalyzes the synthesis of the hydroxymethylpyrimidine phosphate (HMP-P) moiety of thiamine from aminoimidazole ribotide (AIR) in a radical S-adenosyl-L-methionine (SAM)-dependent reaction. This is Phosphomethylpyrimidine synthase from Campylobacter jejuni subsp. jejuni serotype O:2 (strain ATCC 700819 / NCTC 11168).